The primary structure comprises 184 residues: ATP synthase subunit b, chloroplastic (184 aa).

A helical transmembrane segment spans residues 27-49 (LATNPINLSVVLGVLVFFGKGVL).

The protein belongs to the ATPase B chain family. In terms of assembly, F-type ATPases have 2 components, F(1) - the catalytic core - and F(0) - the membrane proton channel. F(1) has five subunits: alpha(3), beta(3), gamma(1), delta(1), epsilon(1). F(0) has four main subunits: a(1), b(1), b'(1) and c(10-14). The alpha and beta chains form an alternating ring which encloses part of the gamma chain. F(1) is attached to F(0) by a central stalk formed by the gamma and epsilon chains, while a peripheral stalk is formed by the delta, b and b' chains.

It is found in the plastid. The protein resides in the chloroplast thylakoid membrane. F(1)F(0) ATP synthase produces ATP from ADP in the presence of a proton or sodium gradient. F-type ATPases consist of two structural domains, F(1) containing the extramembraneous catalytic core and F(0) containing the membrane proton channel, linked together by a central stalk and a peripheral stalk. During catalysis, ATP synthesis in the catalytic domain of F(1) is coupled via a rotary mechanism of the central stalk subunits to proton translocation. Its function is as follows. Component of the F(0) channel, it forms part of the peripheral stalk, linking F(1) to F(0). This is ATP synthase subunit b, chloroplastic from Phaseolus vulgaris (Kidney bean).